The primary structure comprises 221 residues: Thymidylate kinase (221 aa).

12–19 is an ATP binding site; the sequence is GIDGAGKS.

Belongs to the thymidylate kinase family.

The enzyme catalyses dTMP + ATP = dTDP + ADP. Phosphorylation of dTMP to form dTDP in both de novo and salvage pathways of dTTP synthesis. In Paracidovorax citrulli (strain AAC00-1) (Acidovorax citrulli), this protein is Thymidylate kinase.